Here is a 152-residue protein sequence, read N- to C-terminus: Large ribosomal subunit protein uL13 (152 aa).

Belongs to the universal ribosomal protein uL13 family. In terms of assembly, part of the 50S ribosomal subunit.

This protein is one of the early assembly proteins of the 50S ribosomal subunit, although it is not seen to bind rRNA by itself. It is important during the early stages of 50S assembly. The chain is Large ribosomal subunit protein uL13 from Borreliella afzelii (strain PKo) (Borrelia afzelii).